The primary structure comprises 102 residues: Co-chaperonin GroES (102 aa).

Belongs to the GroES chaperonin family. In terms of assembly, heptamer of 7 subunits arranged in a ring. Interacts with the chaperonin GroEL.

The protein localises to the cytoplasm. In terms of biological role, together with the chaperonin GroEL, plays an essential role in assisting protein folding. The GroEL-GroES system forms a nano-cage that allows encapsulation of the non-native substrate proteins and provides a physical environment optimized to promote and accelerate protein folding. GroES binds to the apical surface of the GroEL ring, thereby capping the opening of the GroEL channel. The chain is Co-chaperonin GroES from Anabaena sp. (strain L31).